A 357-amino-acid polypeptide reads, in one-letter code: Alanine racemase (357 aa).

Lysine 34 serves as the catalytic Proton acceptor; specific for D-alanine. The residue at position 34 (lysine 34) is an N6-(pyridoxal phosphate)lysine. Arginine 130 serves as a coordination point for substrate. Catalysis depends on tyrosine 253, which acts as the Proton acceptor; specific for L-alanine. Methionine 301 provides a ligand contact to substrate.

It belongs to the alanine racemase family. It depends on pyridoxal 5'-phosphate as a cofactor.

The enzyme catalyses L-alanine = D-alanine. The protein operates within amino-acid biosynthesis; D-alanine biosynthesis; D-alanine from L-alanine: step 1/1. Its function is as follows. Catalyzes the interconversion of L-alanine and D-alanine. May also act on other amino acids. The sequence is that of Alanine racemase (alr) from Mannheimia succiniciproducens (strain KCTC 0769BP / MBEL55E).